A 110-amino-acid chain; its full sequence is UPF0060 membrane protein Bcep1808_1236 (110 aa).

3 consecutive transmembrane segments (helical) span residues 9–29 (ALFA…WLVL), 34–54 (PVWL…LLTL), and 66–86 (YGGV…GVAL).

The protein belongs to the UPF0060 family.

It localises to the cell inner membrane. In Burkholderia vietnamiensis (strain G4 / LMG 22486) (Burkholderia cepacia (strain R1808)), this protein is UPF0060 membrane protein Bcep1808_1236.